The primary structure comprises 512 residues: Putative UDP-glucuronosyltransferase ugt-55 (512 aa).

The signal sequence occupies residues 1–22 (MQLLTLPTLIFIFLNYGTPCLS). The chain crosses the membrane as a helical span at residues 487-507 (ILLYLDSIAMFTLTLLTMILI).

It belongs to the UDP-glycosyltransferase family.

Its subcellular location is the membrane. The enzyme catalyses glucuronate acceptor + UDP-alpha-D-glucuronate = acceptor beta-D-glucuronoside + UDP + H(+). In Caenorhabditis elegans, this protein is Putative UDP-glucuronosyltransferase ugt-55 (ugt-55).